Here is a 202-residue protein sequence, read N- to C-terminus: Polyamine-modulated factor 1 (202 aa).

Positions 1-15 are enriched in basic and acidic residues; that stretch reads MAEVSRDSEAAERGP. Residues 1–26 are disordered; the sequence is MAEVSRDSEAAERGPEGSSPEAVPGD. Positions 153–194 form a coiled coil; the sequence is EAKNQELADAVLAGRRQVEELQQQVRALQQTWQALHREQREL.

In terms of assembly, component of the MIS12 complex composed of MIS12, DSN1, NSL1 and PMF1. Interacts with COPS7A. Interacts via its coiled-coil domain with the leucine-zipper domain of NFE2L2. The interaction with NFE2L2 is required for the transcriptional regulation of SSAT.

It is found in the nucleus. The protein resides in the chromosome. Its subcellular location is the centromere. The protein localises to the kinetochore. In terms of biological role, part of the MIS12 complex which is required for normal chromosome alignment and segregation and for kinetochore formation during mitosis. May act as a cotranscription partner of NFE2L2 involved in regulation of polyamine-induced transcription of SSAT. The protein is Polyamine-modulated factor 1 of Mus musculus (Mouse).